Reading from the N-terminus, the 223-residue chain is Deoxyribose-phosphate aldolase (223 aa).

Asp91 acts as the Proton donor/acceptor in catalysis. The active-site Schiff-base intermediate with acetaldehyde is the Lys154. Lys183 acts as the Proton donor/acceptor in catalysis.

The protein belongs to the DeoC/FbaB aldolase family. DeoC type 1 subfamily.

It is found in the cytoplasm. The enzyme catalyses 2-deoxy-D-ribose 5-phosphate = D-glyceraldehyde 3-phosphate + acetaldehyde. It participates in carbohydrate degradation; 2-deoxy-D-ribose 1-phosphate degradation; D-glyceraldehyde 3-phosphate and acetaldehyde from 2-deoxy-alpha-D-ribose 1-phosphate: step 2/2. Its function is as follows. Catalyzes a reversible aldol reaction between acetaldehyde and D-glyceraldehyde 3-phosphate to generate 2-deoxy-D-ribose 5-phosphate. This is Deoxyribose-phosphate aldolase from Geobacillus sp. (strain WCH70).